A 154-amino-acid chain; its full sequence is MKTLKGHLSAKNLRIAIVGSCFNQAMADALVSGTQETFLKFGGSEDGLMTIRVPGAFEIPCTIKKLLSSERKFDAIVACGVLIQGETDHYNQIVNQVAAGIGALSLEFCLPITLSIVAAPSAEIAWQRSGIKGRHLGVSGMTTAIEMATLFTQI.

5-amino-6-(D-ribitylamino)uracil is bound by residues Phe22, 56 to 58 (AFE), and 81 to 83 (VLI). Residue 86 to 87 (ET) participates in (2S)-2-hydroxy-3-oxobutyl phosphate binding. The active-site Proton donor is the His89. Residue Leu114 coordinates 5-amino-6-(D-ribitylamino)uracil. Arg128 serves as a coordination point for (2S)-2-hydroxy-3-oxobutyl phosphate.

This sequence belongs to the DMRL synthase family.

It catalyses the reaction (2S)-2-hydroxy-3-oxobutyl phosphate + 5-amino-6-(D-ribitylamino)uracil = 6,7-dimethyl-8-(1-D-ribityl)lumazine + phosphate + 2 H2O + H(+). The protein operates within cofactor biosynthesis; riboflavin biosynthesis; riboflavin from 2-hydroxy-3-oxobutyl phosphate and 5-amino-6-(D-ribitylamino)uracil: step 1/2. Catalyzes the formation of 6,7-dimethyl-8-ribityllumazine by condensation of 5-amino-6-(D-ribitylamino)uracil with 3,4-dihydroxy-2-butanone 4-phosphate. This is the penultimate step in the biosynthesis of riboflavin. The chain is 6,7-dimethyl-8-ribityllumazine synthase from Chlamydia pneumoniae (Chlamydophila pneumoniae).